A 186-amino-acid chain; its full sequence is ATP synthase subunit delta (186 aa).

This sequence belongs to the ATPase delta chain family. In terms of assembly, F-type ATPases have 2 components, F(1) - the catalytic core - and F(0) - the membrane proton channel. F(1) has five subunits: alpha(3), beta(3), gamma(1), delta(1), epsilon(1). F(0) has three main subunits: a(1), b(2) and c(10-14). The alpha and beta chains form an alternating ring which encloses part of the gamma chain. F(1) is attached to F(0) by a central stalk formed by the gamma and epsilon chains, while a peripheral stalk is formed by the delta and b chains.

It is found in the cell inner membrane. Functionally, f(1)F(0) ATP synthase produces ATP from ADP in the presence of a proton or sodium gradient. F-type ATPases consist of two structural domains, F(1) containing the extramembraneous catalytic core and F(0) containing the membrane proton channel, linked together by a central stalk and a peripheral stalk. During catalysis, ATP synthesis in the catalytic domain of F(1) is coupled via a rotary mechanism of the central stalk subunits to proton translocation. In terms of biological role, this protein is part of the stalk that links CF(0) to CF(1). It either transmits conformational changes from CF(0) to CF(1) or is implicated in proton conduction. The sequence is that of ATP synthase subunit delta from Ruegeria pomeroyi (strain ATCC 700808 / DSM 15171 / DSS-3) (Silicibacter pomeroyi).